The sequence spans 244 residues: Phosphoadenosine 5'-phosphosulfate reductase (244 aa).

Cys-239 (nucleophile; cysteine thiosulfonate intermediate) is an active-site residue.

It belongs to the PAPS reductase family. CysH subfamily.

It localises to the cytoplasm. It carries out the reaction [thioredoxin]-disulfide + sulfite + adenosine 3',5'-bisphosphate + 2 H(+) = [thioredoxin]-dithiol + 3'-phosphoadenylyl sulfate. It participates in sulfur metabolism; hydrogen sulfide biosynthesis; sulfite from sulfate: step 3/3. Functionally, catalyzes the formation of sulfite from phosphoadenosine 5'-phosphosulfate (PAPS) using thioredoxin as an electron donor. In Shigella flexneri, this protein is Phosphoadenosine 5'-phosphosulfate reductase.